A 701-amino-acid polypeptide reads, in one-letter code: Dynein axonemal intermediate chain 1 (701 aa).

Disordered stretches follow at residues 1–45 (MPSK…VRPP) and 119–165 (EMVA…DIPA). Serine 124 and serine 127 each carry phosphoserine. Positions 136 to 155 (ENLEEEEEPKEGEGEAEAEA) are enriched in acidic residues. WD repeat units follow at residues 382–422 (SSES…SQPC), 431–474 (KHTD…LVHI), 539–579 (AHNM…PMFI), 581–621 (DLNS…YEAI), and 629–668 (KKKNKITHVQFNPIHPIIIVGDDRGHIICLKLSPNLRKMP).

It belongs to the dynein intermediate chain family. As to quaternary structure, consists of at least two heavy chains and a number of intermediate and light chains. Interacts with BICD2. Interacts with CFAP45 and CFAP52. Interacts with CFAP53.

Its subcellular location is the cytoplasm. The protein localises to the cytoskeleton. The protein resides in the cilium axoneme. In terms of biological role, part of the dynein complex of respiratory cilia. This is Dynein axonemal intermediate chain 1 (Dnai1) from Mus musculus (Mouse).